The primary structure comprises 89 residues: Small ribosomal subunit protein uS14A (89 aa).

Belongs to the universal ribosomal protein uS14 family. In terms of assembly, part of the 30S ribosomal subunit. Contacts proteins S3 and S10.

Binds 16S rRNA, required for the assembly of 30S particles and may also be responsible for determining the conformation of the 16S rRNA at the A site. This is Small ribosomal subunit protein uS14A from Staphylococcus epidermidis (strain ATCC 35984 / DSM 28319 / BCRC 17069 / CCUG 31568 / BM 3577 / RP62A).